The sequence spans 318 residues: Transaldolase (318 aa).

Lys126 functions as the Schiff-base intermediate with substrate in the catalytic mechanism.

Belongs to the transaldolase family. Type 1 subfamily. As to quaternary structure, homodimer.

The protein resides in the cytoplasm. The enzyme catalyses D-sedoheptulose 7-phosphate + D-glyceraldehyde 3-phosphate = D-erythrose 4-phosphate + beta-D-fructose 6-phosphate. It functions in the pathway carbohydrate degradation; pentose phosphate pathway; D-glyceraldehyde 3-phosphate and beta-D-fructose 6-phosphate from D-ribose 5-phosphate and D-xylulose 5-phosphate (non-oxidative stage): step 2/3. In terms of biological role, transaldolase is important for the balance of metabolites in the pentose-phosphate pathway. This chain is Transaldolase, found in Variovorax paradoxus (strain S110).